Reading from the N-terminus, the 237-residue chain is Sensory rhodopsin-2 (237 aa).

At 1 to 2 the chain is on the extracellular side; that stretch reads MA. Residues 3-23 form a helical membrane-spanning segment; it reads LTTWFWVGAVGMLAGTVLPIR. Topologically, residues 24 to 31 are cytoplasmic; the sequence is DCIRHPSH. Residues 32–53 traverse the membrane as a helical segment; it reads RRYDLVLAGITGLAAIAYTTMG. The Extracellular portion of the chain corresponds to 54-67; the sequence is LGITATTVGDRTVY. The chain crosses the membrane as a helical span at residues 68–89; it reads LARYIDWLVTTPLIVLYLAMLA. The Cytoplasmic segment spans residues 90–92; it reads RPG. The chain crosses the membrane as a helical span at residues 93–115; that stretch reads HRTSAWLLAADVFVIAAGIAAAL. Over 116 to 119 the chain is Extracellular; sequence TTGV. A helical transmembrane segment spans residues 120–147; that stretch reads QRWLFFAVGAAGYAALLYGLLGTLPRAL. The Cytoplasmic portion of the chain corresponds to 148-150; sequence GDD. The helical transmembrane segment at 151-178 threads the bilayer; the sequence is PRVRSLFVTLRNITVVLWTLYPVVWLLS. The Extracellular segment spans residues 179 to 186; sequence PAGIGILQ. A helical transmembrane segment spans residues 187–214; it reads TEMYTIVVVYLDFISKVAFVAFAVLGAD. K202 bears the N6-(retinylidene)lysine mark. The Cytoplasmic segment spans residues 215–237; sequence AVSRLVAADAAAPATAEPTPDGD.

It belongs to the archaeal/bacterial/fungal opsin family. As to quaternary structure, interacts with HTR-II.

It is found in the cell membrane. Functionally, photophobic photoreceptor responsible for the negative phototaxis. Activates the sensory rhodopsin II transducer (HTR-II) in response to blue light. The sequence is that of Sensory rhodopsin-2 (sop2) from Halobacterium salinarum (strain ATCC 700922 / JCM 11081 / NRC-1) (Halobacterium halobium).